We begin with the raw amino-acid sequence, 325 residues long: Diacylglycerol acyltransferase/mycolyltransferase Ag85B (325 aa).

Positions M1–A38 are cleaved as a signal peptide. L82–R83 contributes to the substrate binding site. Residues F98–V108 form a fibronectin-binding region. C127 and C132 are oxidised to a cystine. Residue S166 participates in substrate binding. Catalysis depends on S166, which acts as the Nucleophile. E272 is an active-site residue. Substrate-binding positions include L274–R277 and H304–W306. H304 is an active-site residue.

This sequence belongs to the mycobacterial A85 antigen family.

The protein resides in the secreted. The enzyme catalyses 2 alpha,alpha'-trehalose 6-mycolate = alpha,alpha'-trehalose 6,6'-bismycolate + alpha,alpha-trehalose. The catalysed reaction is an acyl-CoA + a 1,2-diacyl-sn-glycerol = a triacyl-sn-glycerol + CoA. In terms of biological role, the antigen 85 proteins (FbpA, FbpB, FbpC) are responsible for the high affinity of mycobacteria for fibronectin, a large adhesive glycoprotein. They also help to maintain the integrity of the cell wall by catalyzing the transfer of mycolic acids to cell wall arabinogalactan and through the synthesis of alpha,alpha-trehalose dimycolate (TDM, cord factor). They catalyze the transfer of a mycoloyl residue from one molecule of alpha,alpha-trehalose monomycolate (TMM) to another TMM, leading to the formation of TDM. The protein is Diacylglycerol acyltransferase/mycolyltransferase Ag85B (fbpB) of Mycolicibacterium smegmatis (strain ATCC 700084 / mc(2)155) (Mycobacterium smegmatis).